The following is a 382-amino-acid chain: Carbamoyl phosphate synthase small chain (382 aa).

The segment at 1–187 is CPSase; the sequence is MPTPALLVLA…EFRPQTATEE (187 aa). 3 residues coordinate L-glutamine: Ser-47, Gly-239, and Gly-241. Residues 191–377 enclose the Glutamine amidotransferase type-1 domain; that stretch reads TVVAIDFGVK…VAQMRAYRQQ (187 aa). Cys-267 (nucleophile) is an active-site residue. The L-glutamine site is built by Leu-268, Gln-271, Asn-307, Gly-309, and Phe-310. Catalysis depends on residues His-350 and Glu-352.

The protein belongs to the CarA family. Composed of two chains; the small (or glutamine) chain promotes the hydrolysis of glutamine to ammonia, which is used by the large (or ammonia) chain to synthesize carbamoyl phosphate. Tetramer of heterodimers (alpha,beta)4.

The enzyme catalyses hydrogencarbonate + L-glutamine + 2 ATP + H2O = carbamoyl phosphate + L-glutamate + 2 ADP + phosphate + 2 H(+). The catalysed reaction is L-glutamine + H2O = L-glutamate + NH4(+). The protein operates within amino-acid biosynthesis; L-arginine biosynthesis; carbamoyl phosphate from bicarbonate: step 1/1. Its pathway is pyrimidine metabolism; UMP biosynthesis via de novo pathway; (S)-dihydroorotate from bicarbonate: step 1/3. Its function is as follows. Small subunit of the glutamine-dependent carbamoyl phosphate synthetase (CPSase). CPSase catalyzes the formation of carbamoyl phosphate from the ammonia moiety of glutamine, carbonate, and phosphate donated by ATP, constituting the first step of 2 biosynthetic pathways, one leading to arginine and/or urea and the other to pyrimidine nucleotides. The small subunit (glutamine amidotransferase) binds and cleaves glutamine to supply the large subunit with the substrate ammonia. The protein is Carbamoyl phosphate synthase small chain of Thermosynechococcus vestitus (strain NIES-2133 / IAM M-273 / BP-1).